The chain runs to 287 residues: Acetylglutamate kinase (287 aa).

Residues 64-65 (GG), Arg86, and Asn185 contribute to the substrate site.

Belongs to the acetylglutamate kinase family. ArgB subfamily.

The protein localises to the cytoplasm. The enzyme catalyses N-acetyl-L-glutamate + ATP = N-acetyl-L-glutamyl 5-phosphate + ADP. Its pathway is amino-acid biosynthesis; L-arginine biosynthesis; N(2)-acetyl-L-ornithine from L-glutamate: step 2/4. In terms of biological role, catalyzes the ATP-dependent phosphorylation of N-acetyl-L-glutamate. This Hydrogenobaculum sp. (strain Y04AAS1) protein is Acetylglutamate kinase.